The chain runs to 430 residues: Small ribosomal subunit protein uS9m (430 aa).

The N-terminal 34 residues, 1–34 (MLSRLFLRHSNLRFVTLVSSKSNSQIFSSFIRPL), are a transit peptide targeting the mitochondrion. The interval 32-97 (RPLSTNSSGG…GGEGKWPEEP (66 aa)) is disordered. The span at 39–48 (SGGGGNGDGN) shows a compositional bias: gly residues. Residues 68–79 (GPFSSDDSFGSS) show a composition bias toward low complexity. A compositionally biased stretch (gly residues) spans 80–91 (GVAGSGLPGGEG).

Belongs to the universal ribosomal protein uS9 family. Interacts (via C terminus) with PIA2. Component of the mitochondrial ribosome small subunit. As to expression, expressed in root tips, young leaves, flowers and siliques.

It is found in the mitochondrion. Functionally, mitochondrial ribosomal protein required for central cell maturation. May work together with PIA2 in controlling female gametophyte development, possibly by regulating the expression of some mitochondrial proteins. The protein is Small ribosomal subunit protein uS9m of Arabidopsis thaliana (Mouse-ear cress).